Here is a 401-residue protein sequence, read N- to C-terminus: Probable 2,3-bisphosphoglycerate-independent phosphoglycerate mutase (401 aa).

Belongs to the BPG-independent phosphoglycerate mutase family. A-PGAM subfamily.

The catalysed reaction is (2R)-2-phosphoglycerate = (2R)-3-phosphoglycerate. It participates in carbohydrate degradation; glycolysis; pyruvate from D-glyceraldehyde 3-phosphate: step 3/5. In terms of biological role, catalyzes the interconversion of 2-phosphoglycerate and 3-phosphoglycerate. The polypeptide is Probable 2,3-bisphosphoglycerate-independent phosphoglycerate mutase (Thermotoga neapolitana (strain ATCC 49049 / DSM 4359 / NBRC 107923 / NS-E)).